Consider the following 188-residue polypeptide: Pyridoxal 5'-phosphate synthase subunit PdxT (188 aa).

Position 47 to 49 (47 to 49 (GES)) interacts with L-glutamine. Catalysis depends on Cys-79, which acts as the Nucleophile. L-glutamine contacts are provided by residues Arg-105 and 134 to 135 (IR). Catalysis depends on charge relay system residues His-170 and Glu-172.

It belongs to the glutaminase PdxT/SNO family. As to quaternary structure, in the presence of PdxS, forms a dodecamer of heterodimers. Only shows activity in the heterodimer.

It carries out the reaction aldehydo-D-ribose 5-phosphate + D-glyceraldehyde 3-phosphate + L-glutamine = pyridoxal 5'-phosphate + L-glutamate + phosphate + 3 H2O + H(+). The enzyme catalyses L-glutamine + H2O = L-glutamate + NH4(+). It functions in the pathway cofactor biosynthesis; pyridoxal 5'-phosphate biosynthesis. Functionally, catalyzes the hydrolysis of glutamine to glutamate and ammonia as part of the biosynthesis of pyridoxal 5'-phosphate. The resulting ammonia molecule is channeled to the active site of PdxS. The protein is Pyridoxal 5'-phosphate synthase subunit PdxT of Listeria welshimeri serovar 6b (strain ATCC 35897 / DSM 20650 / CCUG 15529 / CIP 8149 / NCTC 11857 / SLCC 5334 / V8).